We begin with the raw amino-acid sequence, 347 residues long: Peptidoglycan recognition protein 3 (347 aa).

The first 26 residues, 1 to 26, serve as a signal peptide directing secretion; the sequence is MLVSWDHPKMLPRLLGFLALSLLACG. N-acetylmuramoyl-L-alanine amidase domains lie at 77–185 and 206–328; these read LQSQ…KACP and PAKF…VSNI. N-linked (GlcNAc...) asparagine glycosylation is present at asparagine 120. 3 disulfides stabilise this stretch: cysteine 184-cysteine 306, cysteine 200-cysteine 244, and cysteine 220-cysteine 226. Peptidoglycan contacts are provided by histidine 237 and tyrosine 248. Residues 270–275 form an interaction with murein region; that stretch reads HTYGYN.

This sequence belongs to the N-acetylmuramoyl-L-alanine amidase 2 family. Monomer. Homodimer; disulfide-linked. Heterodimer with PGLYRP4; disulfide-linked. As to expression, detected in lung, spleen and stomach, and at low levels in eye, heart, thymus and testis.

It is found in the secreted. Its function is as follows. Pattern receptor that binds to murein peptidoglycans (PGN) of Gram-positive bacteria. Has bactericidal activity towards Gram-positive bacteria. May kill Gram-positive bacteria by interfering with peptidoglycan biosynthesis. Also binds to Gram-negative bacteria, and has bacteriostatic activity towards Gram-negative bacteria. Plays a role in innate immunity. This Mus musculus (Mouse) protein is Peptidoglycan recognition protein 3 (Pglyrp3).